The sequence spans 249 residues: 3-deoxy-D-manno-octulosonic acid kinase (249 aa).

Residue Asp175 is part of the active site.

It belongs to the protein kinase superfamily. KdkA/RfaP family.

Its subcellular location is the cell inner membrane. The enzyme catalyses an alpha-Kdo-(2-&gt;6)-lipid IVA + ATP = a 4-O-phospho-alpha-Kdo-(2-&gt;6)-lipid IVA + ADP + H(+). The protein operates within bacterial outer membrane biogenesis; LPS core biosynthesis. Its function is as follows. Catalyzes the ATP-dependent phosphorylation of the 3-deoxy-D-manno-octulosonic acid (Kdo) residue in Kdo-lipid IV(A) at the 4-OH position. This is 3-deoxy-D-manno-octulosonic acid kinase from Stenotrophomonas maltophilia (strain R551-3).